The sequence spans 449 residues: Secretin receptor (449 aa).

Positions 1-25 are cleaved as a signal peptide; it reads MLSTMRPRLSLLLLRLLLLTKAAHT. At 26–141 the chain is on the extracellular side; that stretch reads VGVPPRLCDV…NERRHAYLLK (116 aa). 3 disulfides stabilise this stretch: Cys46/Cys75, Cys66/Cys107, and Cys89/Cys123. N-linked (GlcNAc...) asparagine glycosylation is found at Asn72, Asn100, Asn106, and Asn128. The chain crosses the membrane as a helical span at residues 142-167; that stretch reads LKVMYTVGYSSSLAMLLVALSILCSF. Residues 168 to 174 lie on the Cytoplasmic side of the membrane; the sequence is RRLHCTR. Residues 175-195 traverse the membrane as a helical segment; sequence NYIHMHLFVSFILRALSNFIK. The Extracellular portion of the chain corresponds to 196–216; sequence DAVLFSSDDVTYCDAHKVGCK. A disulfide bridge links Cys215 with Cys285. The helical transmembrane segment at 217 to 239 threads the bilayer; the sequence is LVMIFFQYCIMANYAWLLVEGLY. At 240-254 the chain is on the cytoplasmic side; it reads LHTLLAISFFSERKY. Residues 255 to 276 traverse the membrane as a helical segment; that stretch reads LQAFVLLGWGSPAIFVALWAIT. At 277–291 the chain is on the extracellular side; it reads RHFLENTGCWDINAN. Asn291 carries N-linked (GlcNAc...) asparagine glycosylation. Residues 292–315 traverse the membrane as a helical segment; that stretch reads ASVWWVIRGPVILSILINFIFFIN. Topologically, residues 316-340 are cytoplasmic; the sequence is ILRILMRKLRTQETRGSETNHYKRL. The helical transmembrane segment at 341-356 threads the bilayer; the sequence is AKSTLLLIPLFGIHYI. The Extracellular portion of the chain corresponds to 357–367; sequence VFAFSPEDAME. The helical transmembrane segment at 368-391 threads the bilayer; it reads VQLFFELALGSFQGLVVAVLYCFL. Over 392 to 449 the chain is Cytoplasmic; it reads NGEVQLEVQKKWRQWHLQEFPLRPVAFNNSFSNATNGPTHSTKASTEQSRSIPRASII. The span at 425–442 shows a compositional bias: polar residues; the sequence is ATNGPTHSTKASTEQSRS. Positions 425–449 are disordered; sequence ATNGPTHSTKASTEQSRSIPRASII.

Belongs to the G-protein coupled receptor 2 family. Phosphorylated on Ser and Thr residues at the cytoplasmic C-terminus by G protein-coupled receptor kinases (GRKs). Post-translationally, N-glycosylated. In terms of tissue distribution, in the brain, expressed in the central amygdala, hippocampus, area postrema, nucleus of the tractus solitary and cerebellum.

It localises to the cell membrane. It is found in the basolateral cell membrane. Functionally, g protein-coupled receptor activated by secretin (SCT), which is involved in different processes such as regulation of the pH of the duodenal content, food intake and water homeostasis. Ligand binding causes a conformation change that triggers signaling via guanine nucleotide-binding proteins (G proteins) and activates cAMP-dependent pathway. Upon binding to secretin, regulates the pH of the duodenum by (1) inhibiting the secretion of gastric acid from the parietal cells of the stomach and (2) stimulating the production of bicarbonate (NaHCO(3)) from the ductal cells of the pancreas. In addition to regulating the pH of the duodenal content, plays a central role in diet induced thermogenesis: acts as a non-sympathetic brown fat (BAT) activator mediating prandial thermogenesis, which consequentially induces satiation. Mechanistically, secretin released by the gut after a meal binds to secretin receptor (SCTR) in brown adipocytes, activating brown fat thermogenesis by stimulating lipolysis, which is sensed in the brain and promotes satiation. Also able to stimulate lipolysis in white adipocytes. Also plays an important role in cellular osmoregulation by regulating renal water reabsorption. Also plays a role in the central nervous system: required for synaptic plasticity. The sequence is that of Secretin receptor from Rattus norvegicus (Rat).